A 177-amino-acid chain; its full sequence is Nucleoside triphosphate/diphosphate phosphatase (177 aa).

R24 serves as the catalytic Proton donor. Residues N88, D104, D106, D108, D121, and E124 each contribute to the Mg(2+) site.

The protein belongs to the Ntdp family. Mg(2+) is required as a cofactor.

The catalysed reaction is a ribonucleoside 5'-triphosphate + H2O = a ribonucleoside 5'-diphosphate + phosphate + H(+). The enzyme catalyses a ribonucleoside 5'-diphosphate + H2O = a ribonucleoside 5'-phosphate + phosphate + H(+). Functionally, has nucleoside phosphatase activity towards nucleoside triphosphates and nucleoside diphosphates. In Geobacillus sp. (strain WCH70), this protein is Nucleoside triphosphate/diphosphate phosphatase.